The chain runs to 114 residues: T cell receptor alpha variable 3 (114 aa).

The signal sequence occupies residues 1–20 (MASAPISMLAMLFTLSGLRA). The Ig-like domain occupies 21–114 (QSVAQPEDQV…SALYFCAVRD (94 aa)). Residues cysteine 42 and cysteine 110 are joined by a disulfide bond. A glycan (N-linked (GlcNAc...) asparagine) is linked at asparagine 87.

As to quaternary structure, alpha-beta TR is a heterodimer composed of an alpha and beta chain; disulfide-linked. The alpha-beta TR is associated with the transmembrane signaling CD3 coreceptor proteins to form the TR-CD3 (TcR or TCR). The assembly of alpha-beta TR heterodimers with CD3 occurs in the endoplasmic reticulum where a single alpha-beta TR heterodimer associates with one CD3D-CD3E heterodimer, one CD3G-CD3E heterodimer and one CD247 homodimer forming a stable octameric structure. CD3D-CD3E and CD3G-CD3E heterodimers preferentially associate with TR alpha and TR beta chains, respectively. The association of the CD247 homodimer is the last step of TcR assembly in the endoplasmic reticulum and is required for transport to the cell surface.

The protein resides in the cell membrane. In terms of biological role, v region of the variable domain of T cell receptor (TR) alpha chain that participates in the antigen recognition. Alpha-beta T cell receptors are antigen specific receptors which are essential to the immune response and are present on the cell surface of T lymphocytes. Recognize peptide-major histocompatibility (MH) (pMH) complexes that are displayed by antigen presenting cells (APC), a prerequisite for efficient T cell adaptive immunity against pathogens. Binding of alpha-beta TR to pMH complex initiates TR-CD3 clustering on the cell surface and intracellular activation of LCK that phosphorylates the ITAM motifs of CD3G, CD3D, CD3E and CD247 enabling the recruitment of ZAP70. In turn ZAP70 phosphorylates LAT, which recruits numerous signaling molecules to form the LAT signalosome. The LAT signalosome propagates signal branching to three major signaling pathways, the calcium, the mitogen-activated protein kinase (MAPK) kinase and the nuclear factor NF-kappa-B (NF-kB) pathways, leading to the mobilization of transcription factors that are critical for gene expression and essential for T cell growth and differentiation. The T cell repertoire is generated in the thymus, by V-(D)-J rearrangement. This repertoire is then shaped by intrathymic selection events to generate a peripheral T cell pool of self-MH restricted, non-autoaggressive T cells. Post-thymic interaction of alpha-beta TR with the pMH complexes shapes TR structural and functional avidity. The chain is T cell receptor alpha variable 3 from Homo sapiens (Human).